Reading from the N-terminus, the 188-residue chain is Peptidyl-tRNA hydrolase (188 aa).

Tyrosine 15 provides a ligand contact to tRNA. Histidine 20 (proton acceptor) is an active-site residue. Positions 63, 65, and 111 each coordinate tRNA.

It belongs to the PTH family. Monomer.

It is found in the cytoplasm. It carries out the reaction an N-acyl-L-alpha-aminoacyl-tRNA + H2O = an N-acyl-L-amino acid + a tRNA + H(+). Functionally, hydrolyzes ribosome-free peptidyl-tRNAs (with 1 or more amino acids incorporated), which drop off the ribosome during protein synthesis, or as a result of ribosome stalling. Catalyzes the release of premature peptidyl moieties from peptidyl-tRNA molecules trapped in stalled 50S ribosomal subunits, and thus maintains levels of free tRNAs and 50S ribosomes. In Hydrogenobaculum sp. (strain Y04AAS1), this protein is Peptidyl-tRNA hydrolase.